The chain runs to 747 residues: Meprin A subunit alpha (747 aa).

The N-terminal stretch at 1–20 (MLWIQPACLLSLIFSAHIAA) is a signal peptide. The propeptide occupies 21–64 (VSIKHLLNGSDHDTDVGEQKDIFEINLAAGLNLFQGDILLPRTR). N-linked (GlcNAc...) asparagine glycans are attached at residues Asn28 and Asn139. One can recognise a Peptidase M12A domain in the interval 65–259 (NAMRDPSSRW…IRLNRMYNCT (195 aa)). Residues 65–713 (NAMRDPSSRW…FYAGERCQAM (649 aa)) lie on the Extracellular side of the membrane. 3 cysteine pairs are disulfide-bonded: Cys106/Cys258, Cys127/Cys146, and Cys268/Cys430. Position 154 (His154) interacts with Zn(2+). Glu155 is a catalytic residue. The Zn(2+) site is built by His158 and His164. N-linked (GlcNAc...) asparagine glycosylation is found at Asn221, Asn257, Asn317, Asn413, Asn439, Asn533, and Asn540. The MAM domain maps to 263–432 (TLLDHCDFEK…ITLTETPCPA (170 aa)). The MATH domain occupies 433–594 (GVWTIRNISQ…GDSLIIFVDF (162 aa)). The disordered stretch occupies residues 638-663 (ESLPSSLGQRHPSRQKRSVENTGPME). The EGF-like domain maps to 671–711 (FRDPCDPNPCQNEGTCVNVKGMASCRCVSGHAFFYAGERCQ). 3 cysteine pairs are disulfide-bonded: Cys675–Cys686, Cys680–Cys695, and Cys697–Cys710. A helical transmembrane segment spans residues 714-741 (HVHGSLLGLLIGCIAGLIFLTFVTFSTT). The Cytoplasmic segment spans residues 742–747 (NGKLRQ).

As to quaternary structure, homotetramer consisting of disulfide-linked alpha subunits, homooligomer consisting of disulfide-linked alpha subunit homodimers, or heterotetramer of two alpha and two beta subunits formed by non-covalent association of two disulfide-linked heterodimers. Genetic factors determine which oligomer(s) will be formed (strain-specific). Interacts with MBL2 through its carbohydrate moiety. This interaction may inhibit its catalytic activity. The cofactor is Zn(2+). Post-translationally, N-glycosylated; contains GlcNAc, galactose, mannose and a small amount of fucose. In terms of tissue distribution, kidney, intestinal brush borders and salivary ducts.

It is found in the membrane. It carries out the reaction Hydrolysis of protein and peptide substrates preferentially on carboxyl side of hydrophobic residues.. With respect to regulation, inhibited by metal ion chelators EDTA and 1,10-phenanthroline, bradykinin analogs, cysteine, CONA65, and several hydroxamate compounds, particularly tyrosine hydroxamate. Not inhibited by 3,4-dichloroisocourmarin, soybean trypsin inhibitor, or the cysteine proteinase inhibitors iodoacetic acid and E-64. The sequence is that of Meprin A subunit alpha (Mep1a) from Mus musculus (Mouse).